The chain runs to 76 residues: U7-lycotoxin-Ls1b (76 aa).

An N-terminal signal peptide occupies residues 1 to 22 (MKLISFTGLALLLIVSLIDVEA). Positions 23–26 (QNEG) are excised as a propeptide.

It belongs to the neurotoxin 19 (CSTX) family. 07 (U7-Lctx) subfamily. Post-translationally, contains 4 disulfide bonds. In terms of tissue distribution, expressed by the venom gland.

Its subcellular location is the secreted. This chain is U7-lycotoxin-Ls1b, found in Lycosa singoriensis (Wolf spider).